The primary structure comprises 534 residues: Peptide chain release factor 3 (534 aa).

The 270-residue stretch at A9–Q278 folds into the tr-type G domain. GTP contacts are provided by residues S18–T25, D86–H90, and N140–D143.

Belongs to the TRAFAC class translation factor GTPase superfamily. Classic translation factor GTPase family. PrfC subfamily.

It localises to the cytoplasm. In terms of biological role, increases the formation of ribosomal termination complexes and stimulates activities of RF-1 and RF-2. It binds guanine nucleotides and has strong preference for UGA stop codons. It may interact directly with the ribosome. The stimulation of RF-1 and RF-2 is significantly reduced by GTP and GDP, but not by GMP. This chain is Peptide chain release factor 3, found in Xylella fastidiosa (strain M23).